The chain runs to 96 residues: MDTDEQGAPGRKPLDRPQTPDELKFYARNYVMLALLAMILFLPFGILAIYFSIQTNEANKCSNWEDAYRNSSRTMWFNMLAIVAFVGIIYILVLVL.

The next 2 helical transmembrane spans lie at V31 to F51 and W76 to L96.

Belongs to the CD225/Dispanin family. As to expression, specifically expressed in testis.

Its subcellular location is the membrane. May play a role in spermatozoa mobility. The protein is Transmembrane protein PMIS2 of Mus musculus (Mouse).